We begin with the raw amino-acid sequence, 201 residues long: MIKLIVGLGNPGAEYTATRHNAGFWLVDQLAREAGATLRDERRFHGFYAKARLFGEEVHLLEPQTYMNRSGQAVVALAHFFKILPTEILVAHDELDLPPGAAKLKLGGGSGGHNGLKDISAHLSSQQYWRLRIGIGHPRDLIPESARAGAKPDVANFVLKPPRKDEQDLIDAAIERALAVMPTAIKGETERAMMQLHRNGA.

Tyrosine 15 provides a ligand contact to tRNA. Histidine 20 (proton acceptor) is an active-site residue. 3 residues coordinate tRNA: tyrosine 66, asparagine 68, and asparagine 114.

The protein belongs to the PTH family. In terms of assembly, monomer.

It is found in the cytoplasm. It carries out the reaction an N-acyl-L-alpha-aminoacyl-tRNA + H2O = an N-acyl-L-amino acid + a tRNA + H(+). Functionally, hydrolyzes ribosome-free peptidyl-tRNAs (with 1 or more amino acids incorporated), which drop off the ribosome during protein synthesis, or as a result of ribosome stalling. Its function is as follows. Catalyzes the release of premature peptidyl moieties from peptidyl-tRNA molecules trapped in stalled 50S ribosomal subunits, and thus maintains levels of free tRNAs and 50S ribosomes. This Burkholderia mallei (strain NCTC 10247) protein is Peptidyl-tRNA hydrolase.